The following is a 450-amino-acid chain: tRNA modification GTPase MnmE (450 aa).

(6S)-5-formyl-5,6,7,8-tetrahydrofolate-binding residues include Arg25, Glu83, and Lys122. The TrmE-type G domain occupies 218–377; the sequence is GFKVAIIGKP…QMEALLDSIG (160 aa). K(+) is bound at residue Asn228. GTP-binding positions include 228–233, 247–253, and 272–275; these read NVGKSS, SDIAGTT, and DTAG. Mg(2+) is bound at residue Ser232. 3 residues coordinate K(+): Ser247, Ile249, and Thr252. Thr253 serves as a coordination point for Mg(2+). Lys450 provides a ligand contact to (6S)-5-formyl-5,6,7,8-tetrahydrofolate.

Belongs to the TRAFAC class TrmE-Era-EngA-EngB-Septin-like GTPase superfamily. TrmE GTPase family. As to quaternary structure, homodimer. Heterotetramer of two MnmE and two MnmG subunits. Requires K(+) as cofactor.

The protein localises to the cytoplasm. In terms of biological role, exhibits a very high intrinsic GTPase hydrolysis rate. Involved in the addition of a carboxymethylaminomethyl (cmnm) group at the wobble position (U34) of certain tRNAs, forming tRNA-cmnm(5)s(2)U34. The polypeptide is tRNA modification GTPase MnmE (Sulfurovum sp. (strain NBC37-1)).